Here is a 505-residue protein sequence, read N- to C-terminus: NADH-quinone oxidoreductase subunit N (505 aa).

14 helical membrane passes run 20–40 (ALAP…GDLF), 59–79 (ALAL…GGVF), 83–103 (GLAA…ALMS), 115–135 (GEYY…VSAG), 137–157 (AIVL…LVAL), 172–192 (FLMG…LYGL), 220–240 (AVVA…TVPF), 251–271 (APTT…FAVL), 285–305 (LWSD…NIAA), 314–334 (MLAY…AACT), 342–362 (AAYL…IIYL), 394–414 (LAAV…TAGF), 431–451 (ITVV…LGVA), and 481–501 (AVCL…LFWI).

The protein belongs to the complex I subunit 2 family. NDH-1 is composed of 14 different subunits. Subunits NuoA, H, J, K, L, M, N constitute the membrane sector of the complex.

The protein resides in the cell inner membrane. It catalyses the reaction a quinone + NADH + 5 H(+)(in) = a quinol + NAD(+) + 4 H(+)(out). Functionally, NDH-1 shuttles electrons from NADH, via FMN and iron-sulfur (Fe-S) centers, to quinones in the respiratory chain. The immediate electron acceptor for the enzyme in this species is believed to be ubiquinone. Couples the redox reaction to proton translocation (for every two electrons transferred, four hydrogen ions are translocated across the cytoplasmic membrane), and thus conserves the redox energy in a proton gradient. The chain is NADH-quinone oxidoreductase subunit N from Desulfovibrio desulfuricans (strain ATCC 27774 / DSM 6949 / MB).